The sequence spans 85 residues: Dynein light chain 1, cytoplasmic (85 aa).

Belongs to the dynein light chain family. Homodimer. Cytoplasmic dynein consists of two catalytic heavy chains (HCs) and a number of non-catalytic subunits which present intermediate chains (ICs), light intermediate chains (LICs) and light chains (LCs). Component of the nuclear pore complex (NPC). NPC constitutes the exclusive means of nucleocytoplasmic transport. NPCs allow the passive diffusion of ions and small molecules and the active, nuclear transport receptor-mediated bidirectional transport of macromolecules such as proteins, RNAs, ribonucleoparticles (RNPs), and ribosomal subunits across the nuclear envelope. Due to its 8-fold rotational symmetry, all subunits are present with 8 copies or multiples thereof.

It localises to the cytoplasm. It is found in the cytoskeleton. The protein resides in the nucleus. The protein localises to the nuclear pore complex. Its function is as follows. Acts as one of several non-catalytic accessory components of the cytoplasmic dynein complex that are thought to be involved in linking dynein to cargos and to adapter proteins that regulate dynein function. Cytoplasmic dynein 1 acts as a motor for the intracellular retrograde motility of vesicles and organelles along microtubules. May play a role in changing or maintaining the spatial distribution of cytoskeletal structures. Also a component of the nuclear pore complex. The polypeptide is Dynein light chain 1, cytoplasmic (dlc2) (Schizosaccharomyces pombe (strain 972 / ATCC 24843) (Fission yeast)).